An 830-amino-acid chain; its full sequence is Protein translocase subunit SecA (830 aa).

ATP is bound by residues Gln-86, 104 to 108 (GEGKT), and Asp-491. Residues Cys-813, Cys-815, Cys-824, and Cys-825 each contribute to the Zn(2+) site.

Belongs to the SecA family. As to quaternary structure, monomer and homodimer. Part of the essential Sec protein translocation apparatus which comprises SecA, SecYEG and auxiliary proteins SecDF. Other proteins may also be involved. It depends on Zn(2+) as a cofactor.

It localises to the cell membrane. The protein resides in the cytoplasm. The catalysed reaction is ATP + H2O + cellular proteinSide 1 = ADP + phosphate + cellular proteinSide 2.. Part of the Sec protein translocase complex. Interacts with the SecYEG preprotein conducting channel. Has a central role in coupling the hydrolysis of ATP to the transfer of proteins into and across the cell membrane, serving as an ATP-driven molecular motor driving the stepwise translocation of polypeptide chains across the membrane. This chain is Protein translocase subunit SecA, found in Syntrophomonas wolfei subsp. wolfei (strain DSM 2245B / Goettingen).